The chain runs to 351 residues: Ribonucleoside-diphosphate reductase subunit beta (351 aa).

Fe cation-binding residues include Asp-94, Glu-124, and His-127. Tyr-131 is a catalytic residue. Residues Glu-191, Glu-225, and His-228 each coordinate Fe cation.

The protein belongs to the ribonucleoside diphosphate reductase small chain family. Tetramer of two alpha and two beta subunits. Fe cation is required as a cofactor.

It carries out the reaction a 2'-deoxyribonucleoside 5'-diphosphate + [thioredoxin]-disulfide + H2O = a ribonucleoside 5'-diphosphate + [thioredoxin]-dithiol. In terms of biological role, provides the precursors necessary for DNA synthesis. Catalyzes the biosynthesis of deoxyribonucleotides from the corresponding ribonucleotides. In Treponema pallidum (strain Nichols), this protein is Ribonucleoside-diphosphate reductase subunit beta (nrdB).